The following is a 339-amino-acid chain: Bifunctional NMN adenylyltransferase/Nudix hydrolase (339 aa).

The NMN adenylyltransferase stretch occupies residues 1-183 (MQTKYQYGIY…RYIALCDEYQ (183 aa)). The 137-residue stretch at 199–335 (PTFITTDAVV…EDHFQIIQHF (137 aa)) folds into the Nudix hydrolase domain. Residues 233-254 (GFIKQNETLVEGMLRELKEETR) carry the Nudix box motif.

It in the N-terminal section; belongs to the archaeal NMN adenylyltransferase family. Requires Mg(2+) as cofactor. Mn(2+) serves as cofactor.

The protein localises to the cytoplasm. It catalyses the reaction beta-nicotinamide D-ribonucleotide + ATP + H(+) = diphosphate + NAD(+). It participates in cofactor biosynthesis; NAD(+) biosynthesis; NAD(+) from nicotinamide D-ribonucleotide: step 1/1. The Nudix hydrolase domain is active on ADP-ribose, (2')-phospho-ADP-ribose, IDP-ribose and NADPH. In Synechocystis sp. (strain ATCC 27184 / PCC 6803 / Kazusa), this protein is Bifunctional NMN adenylyltransferase/Nudix hydrolase.